The primary structure comprises 138 residues: Large ribosomal subunit protein uL14m (138 aa).

It belongs to the universal ribosomal protein uL14 family. Component of the mitochondrial large ribosomal subunit (mt-LSU). Mature yeast 74S mitochondrial ribosomes consist of a small (37S) and a large (54S) subunit. The 37S small subunit contains a 15S ribosomal RNA (15S mt-rRNA) and 34 different proteins. The 54S large subunit contains a 21S rRNA (21S mt-rRNA) and 46 different proteins.

It is found in the mitochondrion. Functionally, component of the mitochondrial ribosome (mitoribosome), a dedicated translation machinery responsible for the synthesis of mitochondrial genome-encoded proteins, including at least some of the essential transmembrane subunits of the mitochondrial respiratory chain. The mitoribosomes are attached to the mitochondrial inner membrane and translation products are cotranslationally integrated into the membrane. This is Large ribosomal subunit protein uL14m (MRPL38) from Saccharomyces cerevisiae (strain ATCC 204508 / S288c) (Baker's yeast).